We begin with the raw amino-acid sequence, 269 residues long: Hydroxyethylthiazole kinase (269 aa).

Methionine 45 contributes to the substrate binding site. ATP is bound by residues arginine 121 and threonine 167. Glycine 194 serves as a coordination point for substrate.

The protein belongs to the Thz kinase family. It depends on Mg(2+) as a cofactor.

The enzyme catalyses 5-(2-hydroxyethyl)-4-methylthiazole + ATP = 4-methyl-5-(2-phosphooxyethyl)-thiazole + ADP + H(+). Its pathway is cofactor biosynthesis; thiamine diphosphate biosynthesis; 4-methyl-5-(2-phosphoethyl)-thiazole from 5-(2-hydroxyethyl)-4-methylthiazole: step 1/1. Its function is as follows. Catalyzes the phosphorylation of the hydroxyl group of 4-methyl-5-beta-hydroxyethylthiazole (THZ). This chain is Hydroxyethylthiazole kinase, found in Bacillus cereus (strain ATCC 14579 / DSM 31 / CCUG 7414 / JCM 2152 / NBRC 15305 / NCIMB 9373 / NCTC 2599 / NRRL B-3711).